The following is a 793-amino-acid chain: Netrin-B (793 aa).

The N-terminal stretch at 1-22 (MVRATGTRMGLLLPIILALAIG) is a signal peptide. The Laminin N-terminal domain maps to 39–303 (KPRKCLPSFV…NLQDNDSADA (265 aa)). Asn103, Asn125, and Asn298 each carry an N-linked (GlcNAc...) asparagine glycan. The interval 332-378 (SVVKRQGKHKGSAYEKHYQSKLAATTPPQQPPKVTPPGKVTPPSTAA) is disordered. The span at 367-378 (PPGKVTPPSTAA) shows a compositional bias: low complexity. Cystine bridges form between Cys405/Cys414, Cys407/Cys461, Cys463/Cys472, Cys475/Cys495, Cys498/Cys507, Cys500/Cys525, Cys528/Cys537, Cys540/Cys558, Cys561/Cys573, Cys563/Cys580, Cys582/Cys591, Cys594/Cys608, Cys649/Cys738, Cys652/Cys740, and Cys665/Cys792. 3 consecutive Laminin EGF-like domains span residues 405 to 497 (CKCN…ECKM), 498 to 560 (CQCN…VCKR), and 561 to 610 (CDCH…PCIK). The disordered stretch occupies residues 420 to 446 (SGSGTALSDQDDGQDEDTPSAPSLANH). Acidic residues predominate over residues 428-437 (DQDDGQDEDT). An NTR domain is found at 649–792 (CGKCKASPKK…KRFQRRARKC (144 aa)). N-linked (GlcNAc...) asparagine glycosylation occurs at Asn746.

In terms of assembly, binds to unc-5 and fra receptors. At 24 hr after puparium formation (APF), detected in the most anterior (oldest) L3, L4 and L5 lamina neurons (at protein level). At 48 hr APF, expressed in all L3, L4 and L5 neurons with slightly higher expression in the L3 neurons (at protein level). At the midline of developing CNS and in different subsets of neurons, muscles, and epidermal patches.

The protein resides in the secreted. The protein localises to the extracellular space. It is found in the extracellular matrix. It localises to the cytoplasm. Its subcellular location is the perinuclear region. Netrins control guidance of CNS commissural axons and peripheral motor axons. Its association with either fra or unc-5 receptors will lead to axon attraction or repulsion, respectively. While short-range repulsion requires both fra and unc-5 receptors, long-range repulsion only requires unc-5. This is Netrin-B (NetB) from Drosophila melanogaster (Fruit fly).